Consider the following 203-residue polypeptide: Small ribosomal subunit protein uS4 (203 aa).

One can recognise an S4 RNA-binding domain in the interval 93–154 (CRFDNVVFRA…KSRNMDAVRN (62 aa)).

It belongs to the universal ribosomal protein uS4 family. As to quaternary structure, part of the 30S ribosomal subunit. Contacts protein S5. The interaction surface between S4 and S5 is involved in control of translational fidelity.

Its function is as follows. One of the primary rRNA binding proteins, it binds directly to 16S rRNA where it nucleates assembly of the body of the 30S subunit. In terms of biological role, with S5 and S12 plays an important role in translational accuracy. In Chloroherpeton thalassium (strain ATCC 35110 / GB-78), this protein is Small ribosomal subunit protein uS4.